The primary structure comprises 199 residues: Pneumococcal vaccine antigen A homolog (199 aa).

It localises to the cell surface. This Streptococcus pyogenes serotype M1 protein is Pneumococcal vaccine antigen A homolog (pvaA).